Here is a 323-residue protein sequence, read N- to C-terminus: Prostaglandin F synthase 2 (323 aa).

NADP(+) is bound by residues G20–Y24 and D50. Y55 acts as the Proton donor in catalysis. Residue H117 coordinates substrate. NADP(+) contacts are provided by residues S166–N167, Q190, Y216–A221, and K270–N280.

The protein belongs to the aldo/keto reductase family. In terms of assembly, monomer.

Its subcellular location is the cytoplasm. It carries out the reaction prostaglandin F2alpha + NADP(+) = prostaglandin D2 + NADPH + H(+). Its pathway is lipid metabolism; prostaglandin biosynthesis. In terms of biological role, catalyzes the reduction of PGD(2) and PGH(2) to PGF(2 alpha) and a stereoisomer, respectively. It has a broad substrate specificity and also reduces other carbonyl compounds. The chain is Prostaglandin F synthase 2 from Bos taurus (Bovine).